The primary structure comprises 359 residues: Pheromone receptor 1 (359 aa).

7 consecutive transmembrane segments (helical) span residues 5 to 25 (VTPFFALFACILVLFALGWHI), 33 to 53 (ITLSLYLFFGNLDNFVNSVAW), 71 to 87 (LRHALYIAIPASNLVIA), 110 to 130 (IIIDLLISVGLPVLYVSLMIV), 147 to 167 (FLSLSWVWVLLVAAPVLIVSF), 206 to 226 (LLVLTAIDMLLFFPIYVGSVS), and 268 to 288 (LILSRLVCPISAYIFFAMFGL). Residues 335–359 (TSGGIDGSPHSEKFSINTPTKYEEA) form a disordered region. Residues 348–359 (FSINTPTKYEEA) show a composition bias toward polar residues.

Belongs to the G-protein coupled receptor 4 family.

The protein resides in the membrane. Its function is as follows. Receptor for the A2 pheromone, a prenylated mating factor. This chain is Pheromone receptor 1 (PRA1), found in Ustilago hordei (Barley covered smut fungus).